Here is a 1080-residue protein sequence, read N- to C-terminus: Isoleucine--tRNA ligase (1080 aa).

The 'HIGH' region motif lies at 48 to 58 (PYASGSIHLGT). The 'KMSKS' region motif lies at 628 to 632 (KMSKS). Residue K631 coordinates ATP.

The protein belongs to the class-I aminoacyl-tRNA synthetase family. IleS type 2 subfamily. As to quaternary structure, monomer. It depends on Zn(2+) as a cofactor.

The protein localises to the cytoplasm. The enzyme catalyses tRNA(Ile) + L-isoleucine + ATP = L-isoleucyl-tRNA(Ile) + AMP + diphosphate. Catalyzes the attachment of isoleucine to tRNA(Ile). As IleRS can inadvertently accommodate and process structurally similar amino acids such as valine, to avoid such errors it has two additional distinct tRNA(Ile)-dependent editing activities. One activity is designated as 'pretransfer' editing and involves the hydrolysis of activated Val-AMP. The other activity is designated 'posttransfer' editing and involves deacylation of mischarged Val-tRNA(Ile). This Methanopyrus kandleri (strain AV19 / DSM 6324 / JCM 9639 / NBRC 100938) protein is Isoleucine--tRNA ligase.